The primary structure comprises 393 residues: Prokineticin receptor 1 (393 aa).

Over 1 to 62 the chain is Extracellular; sequence METTVGTLGE…TNSRTFFAAK (62 aa). An N-linked (GlcNAc...) asparagine glycan is attached at Asn-11. A helical membrane pass occupies residues 63–83; that stretch reads IVIGMALVGIMLVCGIGNFIF. At 84–98 the chain is on the cytoplasmic side; it reads ITALARYKKLRNLTN. Residues 99–119 traverse the membrane as a helical segment; that stretch reads LLIANLAISDFLVAIVCCPFE. Residues 120–145 lie on the Extracellular side of the membrane; sequence MDYYVVRQLSWEHGHVLCASVNYLRT. Cys-137 and Cys-217 are joined by a disulfide. A helical transmembrane segment spans residues 146 to 166; the sequence is VSLYVSTNALLAIAIDRYLAI. The Cytoplasmic portion of the chain corresponds to 167–179; the sequence is VHPLRPRMKCQTA. Residues 180–200 traverse the membrane as a helical segment; that stretch reads AGLIFLVWSVSILIAIPAAYF. The Extracellular portion of the chain corresponds to 201-232; it reads TTETVLVIVESQEKIFCGQIWPVDQQFYYRSY. The helical transmembrane segment at 233–253 threads the bilayer; it reads FLLVFGLEFVGPVIAMTLCYA. Over 254-282 the chain is Cytoplasmic; it reads RVSRELWFKAVPGFQTEQIRRRLRCRRRT. Residues 283 to 303 form a helical membrane-spanning segment; the sequence is VLGLVCVLSAYVLCWAPFYGF. At 304–322 the chain is on the extracellular side; that stretch reads TIVRDFFPSVFVKEKHYLT. The chain crosses the membrane as a helical span at residues 323–343; the sequence is AFYVVECIAMSNSMINTLCFV. The Cytoplasmic segment spans residues 344-393; it reads TVRNNTSKYLKRILRLQWRASPSGSKASADLDLRTTGIPATEEVDCIRLK.

This sequence belongs to the G-protein coupled receptor 1 family. Widely expressed in peripheral tissues with the highest level in the spleen and moderate levels in the adipose tissues, thymus, lung, kidney, testis, uterus and small intestine.

The protein resides in the cell membrane. Its function is as follows. Receptor for prokineticin 1. Exclusively coupled to the G(q) subclass of heteromeric G proteins. Activation leads to mobilization of calcium, stimulation of phosphoinositide turnover and activation of p44/p42 mitogen-activated protein kinase. May play a role during early pregnancy. This is Prokineticin receptor 1 (Prokr1) from Rattus norvegicus (Rat).